The chain runs to 168 residues: MAVLEILTAPDPRLRVQSKEVTDVAAVQTLIDDLLETLYETDNGVGLAAPQVGREEAIVVIDLSENRDEPLVLVNPKVVSGSNKEMGQEGCLSVPDYYADVERYTSVVVEALDRNGKELRIETSEFLAIVMQHEIDHLSGNLFIDYLSPLKQQMAMKKVKKHNKLRAR.

Residues cysteine 91 and histidine 133 each coordinate Fe cation. The active site involves glutamate 134. Residue histidine 137 coordinates Fe cation.

It belongs to the polypeptide deformylase family. Requires Fe(2+) as cofactor.

It catalyses the reaction N-terminal N-formyl-L-methionyl-[peptide] + H2O = N-terminal L-methionyl-[peptide] + formate. Its function is as follows. Removes the formyl group from the N-terminal Met of newly synthesized proteins. Requires at least a dipeptide for an efficient rate of reaction. N-terminal L-methionine is a prerequisite for activity but the enzyme has broad specificity at other positions. This chain is Peptide deformylase 1, found in Vibrio vulnificus (strain YJ016).